The sequence spans 85 residues: Small ribosomal subunit protein bS20 (85 aa).

It belongs to the bacterial ribosomal protein bS20 family.

Binds directly to 16S ribosomal RNA. This Borrelia turicatae (strain 91E135) protein is Small ribosomal subunit protein bS20.